Here is a 282-residue protein sequence, read N- to C-terminus: 2-dehydro-3-deoxyphosphooctonate aldolase (282 aa).

It belongs to the KdsA family.

Its subcellular location is the cytoplasm. It carries out the reaction D-arabinose 5-phosphate + phosphoenolpyruvate + H2O = 3-deoxy-alpha-D-manno-2-octulosonate-8-phosphate + phosphate. It functions in the pathway carbohydrate biosynthesis; 3-deoxy-D-manno-octulosonate biosynthesis; 3-deoxy-D-manno-octulosonate from D-ribulose 5-phosphate: step 2/3. Its pathway is bacterial outer membrane biogenesis; lipopolysaccharide biosynthesis. In Shewanella woodyi (strain ATCC 51908 / MS32), this protein is 2-dehydro-3-deoxyphosphooctonate aldolase.